Reading from the N-terminus, the 230-residue chain is 5'-methylthioadenosine/S-adenosylhomocysteine nucleosidase (230 aa).

Glu12 (proton acceptor) is an active-site residue. Substrate is bound by residues Gly78, Met153, and 174–175; that span reads ME. Residue Asp198 is the Proton donor of the active site.

The protein belongs to the PNP/UDP phosphorylase family. MtnN subfamily.

The catalysed reaction is S-adenosyl-L-homocysteine + H2O = S-(5-deoxy-D-ribos-5-yl)-L-homocysteine + adenine. It catalyses the reaction S-methyl-5'-thioadenosine + H2O = 5-(methylsulfanyl)-D-ribose + adenine. The enzyme catalyses 5'-deoxyadenosine + H2O = 5-deoxy-D-ribose + adenine. The protein operates within amino-acid biosynthesis; L-methionine biosynthesis via salvage pathway; S-methyl-5-thio-alpha-D-ribose 1-phosphate from S-methyl-5'-thioadenosine (hydrolase route): step 1/2. In terms of biological role, catalyzes the irreversible cleavage of the glycosidic bond in both 5'-methylthioadenosine (MTA) and S-adenosylhomocysteine (SAH/AdoHcy) to adenine and the corresponding thioribose, 5'-methylthioribose and S-ribosylhomocysteine, respectively. Also cleaves 5'-deoxyadenosine, a toxic by-product of radical S-adenosylmethionine (SAM) enzymes, into 5-deoxyribose and adenine. In Aeromonas salmonicida (strain A449), this protein is 5'-methylthioadenosine/S-adenosylhomocysteine nucleosidase.